The primary structure comprises 100 residues: MLSLNYGFTISIILFFIGIISLLIHKNLIFILVSLEVLINSIILGFILIGKYWKQIDCCVLYIFIVTIATVEVSVMLAIFLRIYQRYHTLDIYKLREISK.

3 helical membrane-spanning segments follow: residues 4–24, 29–49, and 60–80; these read LNYGFTISIILFFIGIISLLI, IFILVSLEVLINSIILGFILI, and VLYIFIVTIATVEVSVMLAIF.

This sequence belongs to the complex I subunit 4L family. NDH-1 is composed of 13 different subunits. Subunits NuoA, H, J, K, L, M, N constitute the membrane sector of the complex.

The protein localises to the cell membrane. It carries out the reaction a quinone + NADH + 5 H(+)(in) = a quinol + NAD(+) + 4 H(+)(out). Its function is as follows. NDH-1 shuttles electrons from NADH, via FMN and iron-sulfur (Fe-S) centers, to quinones in the respiratory chain. The immediate electron acceptor for the enzyme in this species is believed to be ubiquinone. Couples the redox reaction to proton translocation (for every two electrons transferred, four hydrogen ions are translocated across the cytoplasmic membrane), and thus conserves the redox energy in a proton gradient. In Buchnera aphidicola subsp. Cinara cedri (strain Cc), this protein is NADH-quinone oxidoreductase subunit K.